Consider the following 468-residue polypeptide: Glutamate--tRNA ligase (468 aa).

The 'HIGH' region motif lies at 12 to 22 (PSPTGFIHLGN). A 'KMSKS' region motif is present at residues 244–248 (KMSKR). Residue lysine 247 participates in ATP binding.

It belongs to the class-I aminoacyl-tRNA synthetase family. Glutamate--tRNA ligase type 1 subfamily. Monomer.

It is found in the cytoplasm. The enzyme catalyses tRNA(Glu) + L-glutamate + ATP = L-glutamyl-tRNA(Glu) + AMP + diphosphate. In terms of biological role, catalyzes the attachment of glutamate to tRNA(Glu) in a two-step reaction: glutamate is first activated by ATP to form Glu-AMP and then transferred to the acceptor end of tRNA(Glu). In Polynucleobacter asymbioticus (strain DSM 18221 / CIP 109841 / QLW-P1DMWA-1) (Polynucleobacter necessarius subsp. asymbioticus), this protein is Glutamate--tRNA ligase.